The chain runs to 863 residues: Aminopeptidase N (863 aa).

Residues Glu-124 and 263-267 (GAMEN) each bind substrate. His-299 provides a ligand contact to Zn(2+). Glu-300 serves as the catalytic Proton acceptor. Residues His-303 and Glu-322 each contribute to the Zn(2+) site.

Belongs to the peptidase M1 family. The cofactor is Zn(2+).

It catalyses the reaction Release of an N-terminal amino acid, Xaa-|-Yaa- from a peptide, amide or arylamide. Xaa is preferably Ala, but may be most amino acids including Pro (slow action). When a terminal hydrophobic residue is followed by a prolyl residue, the two may be released as an intact Xaa-Pro dipeptide.. Functionally, aminopeptidase N is involved in the degradation of intracellular peptides generated by protein breakdown during normal growth as well as in response to nutrient starvation. In Caulobacter vibrioides (strain ATCC 19089 / CIP 103742 / CB 15) (Caulobacter crescentus), this protein is Aminopeptidase N (pepN).